The primary structure comprises 341 residues: MKFVDEALIKVEAGKGGNGCLSFRREKFIPRGGPDGGDGGDGGSIYFEASSDLNTLIDFRYTRQYKAENGQSGMGGNCTGKKGEDLTIKVPVGTMVYDADTGELLADISQPGVPMLIAQGGFHGLGNTRYKSSVNRSPRQTTPGSPGESRNLRLELRVLADVGLLGLPNAGKSTLIRAVSSSKAKVADYPFTTLHPGLGVVRVSPYKSFVMADIPGLIEGAAQGAGLGHRFLKHLSRTCVLLHVIDIAPLDGSDPVADAKAILNELTQYNPDLLNKPRWLVLNKIDMLPDAKEREEKIQSIIKGLEWKDKVFSISAIESKGTQELCYALMQLIDEMKKSEA.

The region spanning 1–159 is the Obg domain; sequence MKFVDEALIK…RNLRLELRVL (159 aa). The disordered stretch occupies residues 128-150; the sequence is TRYKSSVNRSPRQTTPGSPGESR. The segment covering 129-144 has biased composition (polar residues); sequence RYKSSVNRSPRQTTPG. One can recognise an OBG-type G domain in the interval 160 to 334; sequence ADVGLLGLPN…LCYALMQLID (175 aa). GTP is bound by residues 166-173, 191-195, 213-216, 283-286, and 315-317; these read GLPNAGKS, FTTLH, DIPG, NKID, and SAI. Positions 173 and 193 each coordinate Mg(2+).

The protein belongs to the TRAFAC class OBG-HflX-like GTPase superfamily. OBG GTPase family. As to quaternary structure, monomer. It depends on Mg(2+) as a cofactor.

Its subcellular location is the cytoplasm. Its function is as follows. An essential GTPase which binds GTP, GDP and possibly (p)ppGpp with moderate affinity, with high nucleotide exchange rates and a fairly low GTP hydrolysis rate. Plays a role in control of the cell cycle, stress response, ribosome biogenesis and in those bacteria that undergo differentiation, in morphogenesis control. This is GTPase Obg from Legionella pneumophila (strain Lens).